The following is a 550-amino-acid chain: Medium-chain acyl-CoA ligase Mig (550 aa).

The signal sequence occupies residues 1–19 (MSDTTTAFTVPAVAKAVAA).

The protein belongs to the ATP-dependent AMP-binding enzyme family.

The protein localises to the secreted. It localises to the cell wall. The enzyme catalyses a medium-chain fatty acid + ATP + CoA = a medium-chain fatty acyl-CoA + AMP + diphosphate. The catalysed reaction is hexanoate + ATP + CoA = hexanoyl-CoA + AMP + diphosphate. It carries out the reaction heptanoate + ATP + CoA = heptanoyl-CoA + AMP + diphosphate. It catalyses the reaction octanoate + ATP + CoA = octanoyl-CoA + AMP + diphosphate. The enzyme catalyses decanoate + ATP + CoA = decanoyl-CoA + AMP + diphosphate. The catalysed reaction is dodecanoate + ATP + CoA = dodecanoyl-CoA + AMP + diphosphate. It carries out the reaction tetradecanoate + ATP + CoA = tetradecanoyl-CoA + AMP + diphosphate. It catalyses the reaction (9Z)-octadecenoate + ATP + CoA = (9Z)-octadecenoyl-CoA + AMP + diphosphate. The enzyme catalyses (9Z,12Z,15Z)-octadecatrienoate + ATP + CoA = (9Z,12Z,15Z)-octadecatrienoyl-CoA + AMP + diphosphate. The catalysed reaction is (5Z,8Z,11Z,14Z)-eicosatetraenoate + ATP + CoA = (5Z,8Z,11Z,14Z)-eicosatetraenoyl-CoA + AMP + diphosphate. Its pathway is lipid metabolism; fatty acid metabolism. With respect to regulation, inhibited by 2-hydroxydodecanoic acid, a typical inhibitor of medium-chain acyl-CoA synthetases. Its function is as follows. Catalyzes the activation of medium-chain fatty acids as acyl-coenzyme A (acyl-CoA). Shows maximal activity with saturated fatty acids of medium-chain length between C6 and C12. Has lower activity with tridecanoic acid (C13), tetradecanoic acid (C14) and with unsaturated fatty acids like oleic acid (C18:1), linolenic acid (C18:3) and arachidonic acid (C20:4). Shows weak activity with some aromatic carbon acids. Involved in the metabolism of fatty acid during mycobacterial survival in macrophages. This chain is Medium-chain acyl-CoA ligase Mig, found in Mycobacterium avium.